Reading from the N-terminus, the 485-residue chain is Hexokinase (485 aa).

Residue S15 is modified to Phosphoserine. One can recognise a Hexokinase domain in the interval 21-468; that stretch reads ANLMEQIHGL…SGVGAAIIAC (448 aa). The interval 75–208 is hexokinase small subdomain; it reads TGKETGDFLA…NIPINVVALI (134 aa). Residue K111 participates in ATP binding. The tract at residues 151–177 is glucose-binding; the sequence is PLGFTFSYPASQKKINSGVLQRWTKGF. Residues 209 to 457 form a hexokinase large subdomain region; it reads NDTTGTLVAS…HPIQLVAAED (249 aa).

As to quaternary structure, monomer and homodimer. The monomeric form is active, the homodimeric form inactive.

It catalyses the reaction a D-hexose + ATP = a D-hexose 6-phosphate + ADP + H(+). The enzyme catalyses D-fructose + ATP = D-fructose 6-phosphate + ADP + H(+). It carries out the reaction D-glucose + ATP = D-glucose 6-phosphate + ADP + H(+). It functions in the pathway carbohydrate metabolism; hexose metabolism. It participates in carbohydrate degradation; glycolysis; D-glyceraldehyde 3-phosphate and glycerone phosphate from D-glucose: step 1/4. Its function is as follows. Catalyzes the phosphorylation of hexose, such as D-glucose and D-fructose, to hexose 6-phosphate (D-glucose 6-phosphate and D-fructose 6-phosphate, respectively). Has higher affinity for D-glucose. Mediates the initial step of glycolysis by catalyzing phosphorylation of D-glucose to D-glucose 6-phosphate. This is Hexokinase (RAG5) from Kluyveromyces lactis (strain ATCC 8585 / CBS 2359 / DSM 70799 / NBRC 1267 / NRRL Y-1140 / WM37) (Yeast).